Reading from the N-terminus, the 389-residue chain is Chalcone synthase 1 (389 aa).

Residue C163 is part of the active site.

Belongs to the thiolase-like superfamily. Chalcone/stilbene synthases family.

It catalyses the reaction (E)-4-coumaroyl-CoA + 3 malonyl-CoA + 3 H(+) = 2',4,4',6'-tetrahydroxychalcone + 3 CO2 + 4 CoA. Its pathway is secondary metabolite biosynthesis; flavonoid biosynthesis. The primary product of this enzyme is 4,2',4',6'-tetrahydroxychalcone (also termed naringenin-chalcone or chalcone) which can under specific conditions spontaneously isomerize into naringenin. This is Chalcone synthase 1 (CHS1) from Citrus sinensis (Sweet orange).